Here is a 149-residue protein sequence, read N- to C-terminus: Large ribosomal subunit protein uL15 (149 aa).

A disordered region spans residues 1-52 (MSELLKLHHLRPAPGSNKAKIRKGRGEASKGKTAGRGTKGTKARSTVPAGFE).

It belongs to the universal ribosomal protein uL15 family. Part of the 50S ribosomal subunit.

In terms of biological role, binds to the 23S rRNA. The sequence is that of Large ribosomal subunit protein uL15 from Thermobifida fusca (strain YX).